Consider the following 214-residue polypeptide: Guanylate kinase (214 aa).

The Guanylate kinase-like domain maps to 6–192 (GTLYIISAPS…ALEDLKAIFR (187 aa)). Position 13–20 (13–20 (APSGAGKT)) interacts with ATP.

It belongs to the guanylate kinase family.

The protein localises to the cytoplasm. The catalysed reaction is GMP + ATP = GDP + ADP. Functionally, essential for recycling GMP and indirectly, cGMP. The protein is Guanylate kinase of Pseudomonas syringae pv. syringae (strain B728a).